A 457-amino-acid polypeptide reads, in one-letter code: MRTEWVAKRRGQGNVTQMHYARQGVITEEMQYVAQRENLPADLIREEVARGRMIIPANINHTNLEPMAIGIASKCKVNANIGASPNSSNLQEEVDKLNLAVKYGADTVMDLSTGGGNLDEIRTAIINASPVPIGTVPVYQALESVHGTIENLTPEDFLHIIEKHAQQGVDYQTIHAGILIEHLPLVRSRITGIVSRGGGILARWMLHHHKQNPLYTHFRDIIEIFKRYDVSFSLGDSLRPGCTHDASDDAQLAELKTLGQLTRKAWEHDVQVMVEGPGHVPMDQIEFNVKKQMEECSEAPFYVLGPLVTDIAPGYDHITSAIGAAMAGWYGTAMLCYVTPKEHLGLPNAEDVRNGLIAYKIAAHAADIARHRPGARDRDDELSKARYNFDWNRQFELSLDPERAKEYHDETLPADIYKTAEFCSMCGPKFCPMQTKVDADALTELEKFLAKEKEVMI.

Substrate-binding positions include Asn-80, Met-109, Tyr-139, His-175, 195–197, 236–239, and Glu-275; these read SRG and DSLR. His-279 is a binding site for Zn(2+). Tyr-302 lines the substrate pocket. His-343 provides a ligand contact to Zn(2+). [4Fe-4S] cluster is bound by residues Cys-423, Cys-426, and Cys-431.

Belongs to the ThiC family. [4Fe-4S] cluster serves as cofactor.

The catalysed reaction is 5-amino-1-(5-phospho-beta-D-ribosyl)imidazole + S-adenosyl-L-methionine = 4-amino-2-methyl-5-(phosphooxymethyl)pyrimidine + CO + 5'-deoxyadenosine + formate + L-methionine + 3 H(+). It participates in cofactor biosynthesis; thiamine diphosphate biosynthesis. Functionally, catalyzes the synthesis of the hydroxymethylpyrimidine phosphate (HMP-P) moiety of thiamine from aminoimidazole ribotide (AIR) in a radical S-adenosyl-L-methionine (SAM)-dependent reaction. In Trichormus variabilis (strain ATCC 29413 / PCC 7937) (Anabaena variabilis), this protein is Phosphomethylpyrimidine synthase.